Consider the following 337-residue polypeptide: uncharacterized protein (337 aa).

One can recognise an ABC transporter domain in the interval 5–235; it reads VEFDNVSRLY…PRTPFVAGFV (231 aa). Residue 37–44 coordinates ATP; that stretch reads GPSGSGKT.

The protein belongs to the ABC transporter superfamily.

Functionally, probably part of the ABC transporter complex YdcSTUV. Probably responsible for energy coupling to the transport system. This is an uncharacterized protein from Escherichia coli (strain K12).